The following is a 113-amino-acid chain: Putative membrane protein insertion efficiency factor (113 aa).

The protein belongs to the UPF0161 family.

It localises to the cell inner membrane. In terms of biological role, could be involved in insertion of integral membrane proteins into the membrane. The chain is Putative membrane protein insertion efficiency factor from Campylobacter jejuni subsp. jejuni serotype O:23/36 (strain 81-176).